A 227-amino-acid polypeptide reads, in one-letter code: ATP synthase F(0) complex subunit a (227 aa).

The next 6 membrane-spanning stretches (helical) occupy residues 14 to 34 (FLGI…FPTP), 69 to 89 (WAIL…LGLL), 99 to 119 (LSLN…IGMF), 139 to 159 (VPVL…ALGV), 165 to 185 (LTAG…LLTM), and 190 to 210 (ALLT…VAMI).

Belongs to the ATPase A chain family. Component of the ATP synthase complex composed at least of ATP5F1A/subunit alpha, ATP5F1B/subunit beta, ATP5MC1/subunit c (homooctomer), MT-ATP6/subunit a, MT-ATP8/subunit 8, ATP5ME/subunit e, ATP5MF/subunit f, ATP5MG/subunit g, ATP5MK/subunit k, ATP5MJ/subunit j, ATP5F1C/subunit gamma, ATP5F1D/subunit delta, ATP5F1E/subunit epsilon, ATP5PF/subunit F6, ATP5PB/subunit b, ATP5PD/subunit d, ATP5PO/subunit OSCP. ATP synthase complex consists of a soluble F(1) head domain (subunits alpha(3) and beta(3)) - the catalytic core - and a membrane F(0) domain - the membrane proton channel (subunits c, a, 8, e, f, g, k and j). These two domains are linked by a central stalk (subunits gamma, delta, and epsilon) rotating inside the F1 region and a stationary peripheral stalk (subunits F6, b, d, and OSCP). Interacts with DNAJC30; interaction is direct.

It is found in the mitochondrion inner membrane. The enzyme catalyses H(+)(in) = H(+)(out). Its function is as follows. Subunit a, of the mitochondrial membrane ATP synthase complex (F(1)F(0) ATP synthase or Complex V) that produces ATP from ADP in the presence of a proton gradient across the membrane which is generated by electron transport complexes of the respiratory chain. ATP synthase complex consist of a soluble F(1) head domain - the catalytic core - and a membrane F(1) domain - the membrane proton channel. These two domains are linked by a central stalk rotating inside the F(1) region and a stationary peripheral stalk. During catalysis, ATP synthesis in the catalytic domain of F(1) is coupled via a rotary mechanism of the central stalk subunits to proton translocation. With the subunit c (ATP5MC1), forms the proton-conducting channel in the F(0) domain, that contains two crucial half-channels (inlet and outlet) that facilitate proton movement from the mitochondrial intermembrane space (IMS) into the matrix. Protons are taken up via the inlet half-channel and released through the outlet half-channel, following a Grotthuss mechanism. This is ATP synthase F(0) complex subunit a from Scyliorhinus canicula (Small-spotted catshark).